A 151-amino-acid chain; its full sequence is SsrA-binding protein (151 aa).

Belongs to the SmpB family.

The protein localises to the cytoplasm. Functionally, required for rescue of stalled ribosomes mediated by trans-translation. Binds to transfer-messenger RNA (tmRNA), required for stable association of tmRNA with ribosomes. tmRNA and SmpB together mimic tRNA shape, replacing the anticodon stem-loop with SmpB. tmRNA is encoded by the ssrA gene; the 2 termini fold to resemble tRNA(Ala) and it encodes a 'tag peptide', a short internal open reading frame. During trans-translation Ala-aminoacylated tmRNA acts like a tRNA, entering the A-site of stalled ribosomes, displacing the stalled mRNA. The ribosome then switches to translate the ORF on the tmRNA; the nascent peptide is terminated with the 'tag peptide' encoded by the tmRNA and targeted for degradation. The ribosome is freed to recommence translation, which seems to be the essential function of trans-translation. The chain is SsrA-binding protein from Nitrosomonas europaea (strain ATCC 19718 / CIP 103999 / KCTC 2705 / NBRC 14298).